We begin with the raw amino-acid sequence, 196 residues long: Imidazoleglycerol-phosphate dehydratase (196 aa).

It belongs to the imidazoleglycerol-phosphate dehydratase family.

The protein localises to the cytoplasm. The enzyme catalyses D-erythro-1-(imidazol-4-yl)glycerol 3-phosphate = 3-(imidazol-4-yl)-2-oxopropyl phosphate + H2O. Its pathway is amino-acid biosynthesis; L-histidine biosynthesis; L-histidine from 5-phospho-alpha-D-ribose 1-diphosphate: step 6/9. The protein is Imidazoleglycerol-phosphate dehydratase of Granulibacter bethesdensis (strain ATCC BAA-1260 / CGDNIH1).